The chain runs to 414 residues: Solute carrier family 25 member 46-B (414 aa).

A compositionally biased stretch (basic and acidic residues) spans 1–13 (MQPRRPDRFDGLE). The interval 1–89 (MQPRRPDRFD…AFGEENSGSS (89 aa)) is disordered. The span at 29-50 (YQSSFPARSLSSSGDLSQQWVT) shows a compositional bias: polar residues. One copy of the Solcar 1 repeat lies at 92-183 (QVNRFAGFGI…GMLSEFTHLP (92 aa)). A run of 6 helical transmembrane segments spans residues 99–119 (FGIG…CIVL), 159–179 (MGST…LSEF), 198–218 (HLLL…ASLI), 254–274 (LLPL…HYII), 310–330 (FPEL…LYPL), and 379–399 (LGFY…AIVL). A Solcar 2 repeat occupies 307-412 (EDYFPELLAN…KIIYSSVVQT (106 aa)).

Belongs to the mitochondrial carrier (TC 2.A.29) family.

It localises to the mitochondrion outer membrane. Its function is as follows. May play a role in mitochondrial dynamics by controlling mitochondrial membrane fission. This Xenopus laevis (African clawed frog) protein is Solute carrier family 25 member 46-B (slc25a46-b).